The chain runs to 512 residues: Opioid growth factor receptor-like protein 1 (512 aa).

3 disordered regions span residues 1 to 72 (MGNI…ETGT), 323 to 469 (IWGP…TCCK), and 488 to 512 (SLSP…GPFT). Acidic residues-rich tracts occupy residues 28–54 (GGEE…DNEE) and 62–71 (TNEGGEEETG). Basic and acidic residues predominate over residues 328–337 (DKQKADENKA). The span at 347–361 (QKKHSHVEKKSRPAK) shows a compositional bias: basic residues. The span at 408–421 (TVTSENNSSKTGQT) shows a compositional bias: polar residues. Basic and acidic residues predominate over residues 449 to 468 (RSLDTEHDLKRPEADRETCC). The span at 490-499 (SPGTSNSNVT) shows a compositional bias: polar residues.

This sequence belongs to the opioid growth factor receptor family.

This Xenopus tropicalis (Western clawed frog) protein is Opioid growth factor receptor-like protein 1 (ogfrl1).